Reading from the N-terminus, the 607-residue chain is Autophagy-related protein 22-2 (607 aa).

The interval 1–29 (MTVAPPSPNSPAAELQQRPPRYPGEDTTP) is disordered. The helical transmembrane segment at 41-61 (YGIAAEVFAVCGVGSFLPLTL) threads the bilayer. N-linked (GlcNAc...) asparagine glycosylation is present at asparagine 89. 3 consecutive transmembrane segments (helical) span residues 119-139 (SFAM…LISF), 151-170 (TLLL…FVFI), and 188-208 (CLGS…ANDP). The interval 235–263 (SFSASDAESGPHPAAEAGSGTSSGPASPE) is disordered. A compositionally biased stretch (low complexity) spans 247-263 (PAAEAGSGTSSGPASPE). 4 helical membrane-spanning segments follow: residues 274 to 294 (GVGL…SLLF), 307 to 327 (TLPL…FTMV), 379 to 399 (VLVF…VSGT), and 415 to 435 (VGLL…LWPV). Asparagine 445 is a glycosylation site (N-linked (GlcNAc...) asparagine). The next 4 helical transmembrane spans lie at 450 to 470 (LCIA…IPVF), 485 to 507 (FPLA…SFFG), 519 to 541 (YALY…GMLI), and 550 to 570 (GFFF…IVNA). The disordered stretch occupies residues 586 to 607 (KGHETEMSEQTEEAEGLLARGI).

It belongs to the ATG22 family.

The protein localises to the vacuole membrane. Its function is as follows. Vacuolar effluxer which mediate the efflux of amino acids resulting from autophagic degradation. The release of autophagic amino acids allows the maintenance of protein synthesis and viability during nitrogen starvation. The sequence is that of Autophagy-related protein 22-2 (atg22-2) from Aspergillus oryzae (strain ATCC 42149 / RIB 40) (Yellow koji mold).